The chain runs to 224 residues: Small ribosomal subunit protein uS5 (224 aa).

A disordered region spans residues 1–40 (MAEQPAGGQGAGDSRDSRGDRDSRGRRGDGGRGGRDRDGD). Positions 13-40 (DSRDSRGDRDSRGRRGDGGRGGRDRDGD) are enriched in basic and acidic residues. Residues 44–107 (YLERVVAINR…EEARKGFFRV (64 aa)) enclose the S5 DRBM domain.

It belongs to the universal ribosomal protein uS5 family. Part of the 30S ribosomal subunit. Contacts proteins S4 and S8.

Functionally, with S4 and S12 plays an important role in translational accuracy. Located at the back of the 30S subunit body where it stabilizes the conformation of the head with respect to the body. The sequence is that of Small ribosomal subunit protein uS5 from Mycolicibacterium paratuberculosis (strain ATCC BAA-968 / K-10) (Mycobacterium paratuberculosis).